The chain runs to 307 residues: Aspartate carbamoyltransferase catalytic subunit (307 aa).

Residues R59 and T60 each contribute to the carbamoyl phosphate site. Residue K87 coordinates L-aspartate. Positions 109, 137, and 140 each coordinate carbamoyl phosphate. 2 residues coordinate L-aspartate: R173 and R223. 2 residues coordinate carbamoyl phosphate: G266 and P267.

Belongs to the aspartate/ornithine carbamoyltransferase superfamily. ATCase family. As to quaternary structure, heterododecamer (2C3:3R2) of six catalytic PyrB chains organized as two trimers (C3), and six regulatory PyrI chains organized as three dimers (R2).

The catalysed reaction is carbamoyl phosphate + L-aspartate = N-carbamoyl-L-aspartate + phosphate + H(+). Its pathway is pyrimidine metabolism; UMP biosynthesis via de novo pathway; (S)-dihydroorotate from bicarbonate: step 2/3. Functionally, catalyzes the condensation of carbamoyl phosphate and aspartate to form carbamoyl aspartate and inorganic phosphate, the committed step in the de novo pyrimidine nucleotide biosynthesis pathway. The polypeptide is Aspartate carbamoyltransferase catalytic subunit (Helicobacter pylori (strain ATCC 700392 / 26695) (Campylobacter pylori)).